The following is a 175-amino-acid chain: Translation initiation factor IF-3 (175 aa).

The protein belongs to the IF-3 family. As to quaternary structure, monomer.

The protein localises to the cytoplasm. Its function is as follows. IF-3 binds to the 30S ribosomal subunit and shifts the equilibrium between 70S ribosomes and their 50S and 30S subunits in favor of the free subunits, thus enhancing the availability of 30S subunits on which protein synthesis initiation begins. The sequence is that of Translation initiation factor IF-3 from Chlamydia trachomatis serovar D (strain ATCC VR-885 / DSM 19411 / UW-3/Cx).